The following is a 420-amino-acid chain: Protein-lysine N-trimethyltransferase SMYD5 (420 aa).

The SET domain maps to 29–358 (AEARFISSAK…AGEEICISYL (330 aa)). The segment at 104–142 (PEQCSIRKDLHQQCPRCQVTYCSAECRQAALEQYHQVLC) adopts an MYND-type zinc-finger fold. Tyrosine 357 is an S-adenosyl-L-methionine binding site. A disordered region spans residues 392–420 (DDPDVTSDEEEEAEGETDDAELEDEMTDV).

The protein belongs to the class V-like SAM-binding methyltransferase superfamily.

It localises to the cytoplasm. The catalysed reaction is L-lysyl-[protein] + 3 S-adenosyl-L-methionine = N(6),N(6),N(6)-trimethyl-L-lysyl-[protein] + 3 S-adenosyl-L-homocysteine + 3 H(+). It catalyses the reaction L-lysyl(20)-[histone H4] + 3 S-adenosyl-L-methionine = N(6),N(6),N(6)-trimethyl-L-lysyl(20)-[histone H4] + 3 S-adenosyl-L-homocysteine + 3 H(+). It carries out the reaction L-lysyl(36)-[histone H3] + 3 S-adenosyl-L-methionine = N(6),N(6),N(6)-trimethyl-L-lysyl(36)-[histone H3] + 3 S-adenosyl-L-homocysteine + 3 H(+). In terms of biological role, protein-lysine N-trimethyltransferase that specifically catalyzes trimethylation of 'Lys-22' of the RPL40/eL40 subunit of the 60S ribosome, thereby promoting translation elongation and protein synthesis. May also act as a histone methyltransferase in the context of histone octamers, but not on nucleosome substrates: trimethylates 'Lys-36' of histone H3 and 'Lys-20' of histone H4 to form H3K36me3 and H4K20me3, respectively. The histone methyltransferase activity, which is independent of its SET domain, is however unsure in vivo. In Gallus gallus (Chicken), this protein is Protein-lysine N-trimethyltransferase SMYD5 (SMYD5).